Here is a 39-residue protein sequence, read N- to C-terminus: Cytochrome b6-f complex subunit 5 (39 aa).

Residues 5–25 traverse the membrane as a helical segment; the sequence is LLCGIVLGLVPITLLGLFVAA.

This sequence belongs to the PetG family. In terms of assembly, the 4 large subunits of the cytochrome b6-f complex are cytochrome b6, subunit IV (17 kDa polypeptide, PetD), cytochrome f and the Rieske protein, while the 4 small subunits are PetG, PetL, PetM and PetN. The complex functions as a dimer.

It is found in the cellular thylakoid membrane. Its function is as follows. Component of the cytochrome b6-f complex, which mediates electron transfer between photosystem II (PSII) and photosystem I (PSI), cyclic electron flow around PSI, and state transitions. PetG is required for either the stability or assembly of the cytochrome b6-f complex. In Prochlorococcus marinus (strain SARG / CCMP1375 / SS120), this protein is Cytochrome b6-f complex subunit 5.